Consider the following 197-residue polypeptide: A-kinase anchor protein 14 (197 aa).

Polar residues-rich tracts occupy residues 1 to 11 (MSETQNSTSQK) and 19 to 29 (AASQTMPNTQD). Positions 1 to 29 (MSETQNSTSQKAMDEDNKAASQTMPNTQD) are disordered. Residues 35-52 (ELTQVALALVEDVINYAV) form an RII-binding region.

In terms of assembly, binds to type II regulatory subunits (RII). In terms of tissue distribution, present in cilia (at protein level). Expressed in tissues containing axoneme-based organelles (cilia and/or flagella): trachea and testis. Highly expressed in airway cilia.

It is found in the cytoplasm. Binds to type II regulatory subunits of protein kinase A and anchors/targets them. The chain is A-kinase anchor protein 14 (AKAP14) from Homo sapiens (Human).